The primary structure comprises 134 residues: TSC22 domain family protein 3 (134 aa).

The residue at position 1 (Met-1) is an N-acetylmethionine. Residues 1–60 (MNTEMYQTPMEVAVYQLHNFSISFFSSLLGGDVVSVKLDNSASGASVVAIDNKIEQAMDL) are AP1-binding. 2 positions are modified to phosphoserine: Ala-42 and Val-73. Residues 76–97 (LKEQIRELVEKNSQLERENTLL) are leucine-zipper. Position 102 is a phosphoserine (Ser-102). The segment at 108–134 (KFQSCLSPEEPAPESPQVPEAPGGSAV) is disordered.

It belongs to the TSC-22/Dip/Bun family. As to quaternary structure, can form homodimers, however it is likely to function as a monomer. Interacts with NFKB1. Interacts (via N-terminus) with JUN and FOS; these interactions inhibit the binding of active AP1 to its target DNA. Interacts with MYOD1. Interacts with HDAC1; this interaction affects HDAC1 activity on MYOG promoter and thus inhibits MYOD1 transcriptional activity. Ubiquitously expressed, including in the fetal brain and liver. Expressed in brain, lung, spleen and skeletal muscle. Lower levels detected in heart and kidney. Not detected in the pancreas. In non-lymphoid tissues, in the absence of inflammation, the major source of constitutive expression is the macrophage lineage. Also expressed in cells from different hemopoietic cell lineages, including bone marrow cells, CD34+ stem cells, mature B- and T-cells, monocytes and granulocytes. Down-regulated in activated macrophages from inflammatory lesions of delayed-type hypersensitivity (DTH) reactions, such as in tuberculosis and in Crohn disease, whereas in Burkitt lymphoma, persists in macrophages involved in the phagocytosis of apoptotic malignant cells.

The protein localises to the cytoplasm. It is found in the nucleus. Its function is as follows. Protects T-cells from IL2 deprivation-induced apoptosis through the inhibition of FOXO3A transcriptional activity that leads to the down-regulation of the pro-apoptotic factor BCL2L11. In macrophages, plays a role in the anti-inflammatory and immunosuppressive effects of glucocorticoids and IL10. In T-cells, inhibits anti-CD3-induced NFKB1 nuclear translocation and thereby NFKB1 DNA-binding activities. In vitro, suppresses AP-1 transcription factor complex DNA-binding activities. Inhibits myogenic differentiation and mediates anti-myogenic effects of glucocorticoids by binding and regulating MYOD1 and HDAC1 transcriptional activity resulting in reduced expression of MYOG. The protein is TSC22 domain family protein 3 of Homo sapiens (Human).